A 399-amino-acid polypeptide reads, in one-letter code: Probable F-box protein At4g22060 (399 aa).

Residues 12–48 (SWSKLPLDLLIMVFERLGFVDFQRTKSVCLAWLYASR) form the F-box domain.

This is Probable F-box protein At4g22060 from Arabidopsis thaliana (Mouse-ear cress).